The chain runs to 530 residues: GH3 domain-containing protein (530 aa).

The signal sequence occupies residues 1-17 (MLLWPLLLLLLLLPTLA). The interval 99–122 (LTKASQTQQEDSGEQPLPPTSNQD) is disordered. N450 carries N-linked (GlcNAc...) asparagine glycosylation. An N5-methylglutamine modification is found at Q489.

Belongs to the GH3 family. Methylated at Gln-489 by N6AMT1.

It is found in the endoplasmic reticulum. It localises to the nucleus envelope. This chain is GH3 domain-containing protein (GHDC), found in Homo sapiens (Human).